The following is a 349-amino-acid chain: Dihydroorotase (349 aa).

Zn(2+) is bound by residues histidine 17 and histidine 19. Substrate-binding positions include 19-21 and asparagine 45; that span reads HLR. Zn(2+) is bound by residues lysine 105, histidine 142, and histidine 180. Position 105 is an N6-carboxylysine (lysine 105). Residue histidine 142 participates in substrate binding. Leucine 225 is a binding site for substrate. Aspartate 253 is a Zn(2+) binding site. Residue aspartate 253 is part of the active site. Residues histidine 257 and alanine 269 each coordinate substrate.

It belongs to the metallo-dependent hydrolases superfamily. DHOase family. Class II DHOase subfamily. Homodimer. Requires Zn(2+) as cofactor.

It carries out the reaction (S)-dihydroorotate + H2O = N-carbamoyl-L-aspartate + H(+). It functions in the pathway pyrimidine metabolism; UMP biosynthesis via de novo pathway; (S)-dihydroorotate from bicarbonate: step 3/3. Catalyzes the reversible cyclization of carbamoyl aspartate to dihydroorotate. In Nitrosomonas europaea (strain ATCC 19718 / CIP 103999 / KCTC 2705 / NBRC 14298), this protein is Dihydroorotase.